We begin with the raw amino-acid sequence, 808 residues long: Quinoprotein glucose dehydrogenase (808 aa).

Residues 1 to 33 (MSTTSRPGLWALITAAVFALCGAILTVGGAWVA) form the signal peptide. 4 consecutive transmembrane segments (helical) span residues 35 to 54 (IGGP…TAFL), 59 to 76 (NPAA…TVIW), 94 to 108 (IVII…PFVS), and 123 to 138 (GAVG…SLFT). Aspartate 470 functions as the Proton acceptor in the catalytic mechanism. A disordered region spans residues 514 to 545 (VPAPETPVPQGAAPGDHTSPTQPMSQLTLRPK). A compositionally biased stretch (polar residues) spans 531-541 (TSPTQPMSQLT).

It belongs to the bacterial PQQ dehydrogenase family. Pyrroloquinoline quinone is required as a cofactor.

It localises to the cell inner membrane. The enzyme catalyses a ubiquinone + D-glucose = D-glucono-1,5-lactone + a ubiquinol. The sequence is that of Quinoprotein glucose dehydrogenase (gdh) from Gluconobacter oxydans (strain 621H) (Gluconobacter suboxydans).